A 509-amino-acid chain; its full sequence is ATP synthase subunit alpha (509 aa).

169–176 (GDRQTGKT) is a binding site for ATP.

Belongs to the ATPase alpha/beta chains family. F-type ATPases have 2 components, CF(1) - the catalytic core - and CF(0) - the membrane proton channel. CF(1) has five subunits: alpha(3), beta(3), gamma(1), delta(1), epsilon(1). CF(0) has four main subunits: a(1), b(1), b'(1) and c(9-12).

Its subcellular location is the cell inner membrane. It carries out the reaction ATP + H2O + 4 H(+)(in) = ADP + phosphate + 5 H(+)(out). Functionally, produces ATP from ADP in the presence of a proton gradient across the membrane. The alpha chain is a regulatory subunit. This is ATP synthase subunit alpha from Erythrobacter litoralis (strain HTCC2594).